Consider the following 160-residue polypeptide: Non-secretory ribonuclease (160 aa).

Residues 1–27 form the signal peptide; it reads MVPKLFTSQICLLLLLGLMGVEGSLHA. C-linked (Man) tryptophan glycosylation occurs at Trp-34. Residue His-42 is the Proton acceptor of the active site. Residue Asn-44 is glycosylated (N-linked (GlcNAc...) asparagine). Intrachain disulfides connect Cys-50–Cys-110, Cys-64–Cys-122, Cys-82–Cys-137, and Cys-89–Cys-98. At Tyr-60 the chain carries 3'-nitrotyrosine. 65-69 lines the substrate pocket; sequence KNQNT. Asn-92, Asn-111, and Asn-138 each carry an N-linked (GlcNAc...) asparagine glycan. His-155 acts as the Proton donor in catalysis.

This sequence belongs to the pancreatic ribonuclease family. Interacts with and forms a tight 1:1 complex with RNH1. Dimerization of two such complexes may occur.

It localises to the lysosome. Its subcellular location is the cytoplasmic granule. It catalyses the reaction an [RNA] containing cytidine + H2O = an [RNA]-3'-cytidine-3'-phosphate + a 5'-hydroxy-ribonucleotide-3'-[RNA].. The enzyme catalyses an [RNA] containing uridine + H2O = an [RNA]-3'-uridine-3'-phosphate + a 5'-hydroxy-ribonucleotide-3'-[RNA].. This is a non-secretory ribonuclease. It is a pyrimidine specific nuclease with a slight preference for U. Cytotoxin and helminthotoxin. Possesses a wide variety of biological activities. In Macaca fascicularis (Crab-eating macaque), this protein is Non-secretory ribonuclease (RNASE2).